Reading from the N-terminus, the 528-residue chain is NAD(P)H-quinone oxidoreductase chain 4 1 (528 aa).

14 helical membrane-spanning segments follow: residues 7 to 27 (FPWL…IPLI), 32 to 52 (WVRW…AYVF), 86 to 106 (LSLP…VAAW), 114 to 134 (LFFF…LAQD), 136 to 156 (LLFF…ISIW), 168 to 188 (FILY…AMAF), 208 to 228 (ALEL…LPIF), 242 to 262 (SAPI…YGLI), 276 to 296 (FAPV…LAAF), 310 to 330 (IAHM…GING), 331 to 351 (AVLQ…LTGI), 375 to 395 (FALF…SGFV), 417 to 437 (GIAL…LSML), and 463 to 483 (MAVA…PRLA).

It belongs to the complex I subunit 4 family.

The protein localises to the cellular thylakoid membrane. It carries out the reaction a plastoquinone + NADH + (n+1) H(+)(in) = a plastoquinol + NAD(+) + n H(+)(out). The enzyme catalyses a plastoquinone + NADPH + (n+1) H(+)(in) = a plastoquinol + NADP(+) + n H(+)(out). NDH-1 shuttles electrons from NAD(P)H, via FMN and iron-sulfur (Fe-S) centers, to quinones in the respiratory chain. The immediate electron acceptor for the enzyme in this species is believed to be plastoquinone. Couples the redox reaction to proton translocation (for every two electrons transferred, four hydrogen ions are translocated across the cytoplasmic membrane), and thus conserves the redox energy in a proton gradient. This chain is NAD(P)H-quinone oxidoreductase chain 4 1, found in Synechococcus sp. (strain JA-2-3B'a(2-13)) (Cyanobacteria bacterium Yellowstone B-Prime).